Consider the following 337-residue polypeptide: Tetraacyldisaccharide 4'-kinase (337 aa).

Residue 51 to 58 participates in ATP binding; it reads HVGGAGKT.

Belongs to the LpxK family.

The catalysed reaction is a lipid A disaccharide + ATP = a lipid IVA + ADP + H(+). It participates in glycolipid biosynthesis; lipid IV(A) biosynthesis; lipid IV(A) from (3R)-3-hydroxytetradecanoyl-[acyl-carrier-protein] and UDP-N-acetyl-alpha-D-glucosamine: step 6/6. In terms of biological role, transfers the gamma-phosphate of ATP to the 4'-position of a tetraacyldisaccharide 1-phosphate intermediate (termed DS-1-P) to form tetraacyldisaccharide 1,4'-bis-phosphate (lipid IVA). This chain is Tetraacyldisaccharide 4'-kinase, found in Afipia carboxidovorans (strain ATCC 49405 / DSM 1227 / KCTC 32145 / OM5) (Oligotropha carboxidovorans).